The primary structure comprises 444 residues: Trigger factor (444 aa).

A PPIase FKBP-type domain is found at 166–251 (GDQVVIDFKG…VKAVKAPKAA (86 aa)).

This sequence belongs to the FKBP-type PPIase family. Tig subfamily.

The protein localises to the cytoplasm. It carries out the reaction [protein]-peptidylproline (omega=180) = [protein]-peptidylproline (omega=0). Its function is as follows. Involved in protein export. Acts as a chaperone by maintaining the newly synthesized protein in an open conformation. Functions as a peptidyl-prolyl cis-trans isomerase. This is Trigger factor from Cereibacter sphaeroides (strain KD131 / KCTC 12085) (Rhodobacter sphaeroides).